An 89-amino-acid polypeptide reads, in one-letter code: Translation initiation factor IF-1, chloroplastic (89 aa).

One can recognise an S1-like domain in the interval 1–72; sequence MKKQDLIDME…TKGRIIYRLR (72 aa).

It belongs to the IF-1 family. Component of the 30S ribosomal translation pre-initiation complex which assembles on the 30S ribosome in the order IF-2 and IF-3, IF-1 and N-formylmethionyl-tRNA(fMet); mRNA recruitment can occur at any time during PIC assembly.

The protein resides in the plastid. The protein localises to the chloroplast. Its function is as follows. One of the essential components for the initiation of protein synthesis. Stabilizes the binding of IF-2 and IF-3 on the 30S subunit to which N-formylmethionyl-tRNA(fMet) subsequently binds. Helps modulate mRNA selection, yielding the 30S pre-initiation complex (PIC). Upon addition of the 50S ribosomal subunit IF-1, IF-2 and IF-3 are released leaving the mature 70S translation initiation complex. This chain is Translation initiation factor IF-1, chloroplastic, found in Angiopteris evecta (Mule's foot fern).